A 216-amino-acid chain; its full sequence is Octanoyltransferase (216 aa).

Residues 35-213 enclose the BPL/LPL catalytic domain; it reads NSNPDFIWIG…TIEEEFNFDF (179 aa). Substrate is bound by residues 77–84, 144–146, and 157–159; these read RGGEVTCH, SIG, and GFS. C175 acts as the Acyl-thioester intermediate in catalysis.

This sequence belongs to the LipB family.

Its subcellular location is the cytoplasm. It catalyses the reaction octanoyl-[ACP] + L-lysyl-[protein] = N(6)-octanoyl-L-lysyl-[protein] + holo-[ACP] + H(+). The protein operates within protein modification; protein lipoylation via endogenous pathway; protein N(6)-(lipoyl)lysine from octanoyl-[acyl-carrier-protein]: step 1/2. Catalyzes the transfer of endogenously produced octanoic acid from octanoyl-acyl-carrier-protein onto the lipoyl domains of lipoate-dependent enzymes. Lipoyl-ACP can also act as a substrate although octanoyl-ACP is likely to be the physiological substrate. The polypeptide is Octanoyltransferase (Prochlorococcus marinus (strain MIT 9301)).